The sequence spans 147 residues: Large ribosomal subunit protein uL15 (147 aa).

Residues 1–58 (MRLHDLKPAEGSTKKKKRVGRGIGSGHGKTSGRGHKGQNARSGGGVRPGFEGGQMPLT) form a disordered region. Positions 42 to 52 (SGGGVRPGFEG) are enriched in gly residues.

Belongs to the universal ribosomal protein uL15 family. As to quaternary structure, part of the 50S ribosomal subunit.

Binds to the 23S rRNA. In Caldanaerobacter subterraneus subsp. tengcongensis (strain DSM 15242 / JCM 11007 / NBRC 100824 / MB4) (Thermoanaerobacter tengcongensis), this protein is Large ribosomal subunit protein uL15.